The sequence spans 284 residues: Rhomboid-type serine protease 2 (284 aa).

6 consecutive transmembrane segments (helical) span residues 17–37, 66–86, 98–118, 124–141, 160–180, and 182–202; these read PPAL…IKSV, FHVN…PLAV, VTLN…GLIF, VIGL…MAYH, IKLY…ILFP, and SSLP…YGYI. The active-site Nucleophile is Ser-128. Residue His-187 is part of the active site.

Belongs to the peptidase S54 family.

The protein resides in the golgi apparatus membrane. Its subcellular location is the golgi apparatus. The protein localises to the cis-Golgi network membrane. The catalysed reaction is Cleaves type-1 transmembrane domains using a catalytic dyad composed of serine and histidine that are contributed by different transmembrane domains.. Probable rhomboid-type serine protease that catalyzes intramembrane proteolysis. In Candida albicans (strain SC5314 / ATCC MYA-2876) (Yeast), this protein is Rhomboid-type serine protease 2 (RBD2).